Consider the following 151-residue polypeptide: Nucleoside diphosphate kinase (151 aa).

The ATP site is built by Lys-11, Phe-59, Arg-87, Thr-93, Arg-104, and Asn-114. The active-site Pros-phosphohistidine intermediate is His-117.

The protein belongs to the NDK family. Homotetramer. Mg(2+) is required as a cofactor.

Its subcellular location is the cytoplasm. It carries out the reaction a 2'-deoxyribonucleoside 5'-diphosphate + ATP = a 2'-deoxyribonucleoside 5'-triphosphate + ADP. It catalyses the reaction a ribonucleoside 5'-diphosphate + ATP = a ribonucleoside 5'-triphosphate + ADP. Its function is as follows. Major role in the synthesis of nucleoside triphosphates other than ATP. The ATP gamma phosphate is transferred to the NDP beta phosphate via a ping-pong mechanism, using a phosphorylated active-site intermediate. The polypeptide is Nucleoside diphosphate kinase (Prochlorococcus marinus (strain NATL1A)).